An 817-amino-acid chain; its full sequence is LisH domain-containing protein ARMC9 (817 aa).

In terms of domain architecture, LisH spans 7–39 (HESELLGLVKEYLDFAEFEDTLKTFSKECKVKG). The stretch at 204–230 (GPNSKELLQQLHQQLVEAERRAMTYLK) forms a coiled coil. Serine 583 carries the phosphoserine modification. Disordered stretches follow at residues 637-659 (RKGP…TPGG) and 761-817 (CKPQ…SIRK). The segment covering 765–774 (VPSTPETVEQ) has biased composition (polar residues). Positions 793–807 (PQQASRPASTASSTR) are enriched in low complexity. Positions 808–817 (GLHSSQSIRK) are enriched in polar residues.

As to quaternary structure, interacts with TOGARAM1, CCDC66, CEP104, CSPP1 and CEP290. Interacts with NDUFAF2.

The protein localises to the cytoplasm. It localises to the cytoskeleton. The protein resides in the cilium basal body. Its subcellular location is the cell projection. It is found in the cilium. The protein localises to the microtubule organizing center. It localises to the centrosome. The protein resides in the centriole. Involved in ciliogenesis. It is required for appropriate acetylation and polyglutamylation of ciliary microtubules, and regulation of cilium length. Acts as a positive regulator of hedgehog (Hh) signaling. May participate in the trafficking and/or retention of GLI2 and GLI3 proteins at the ciliary tip. The chain is LisH domain-containing protein ARMC9 from Mus musculus (Mouse).